A 468-amino-acid polypeptide reads, in one-letter code: Ammonium transporter Amt2 (468 aa).

Transmembrane regions (helical) follow at residues 1–21 (MVGR…TAGA), 39–59 (FVWA…FAML), 77–97 (LMDF…LMMG), 123–143 (LWFF…GSIA), 156–176 (AVVS…GGWL), 194–214 (FAGS…AVML), 236–256 (LAFA…FNAG), 268–288 (IIAS…MAIT), 297–317 (VGMT…PCAW), 321–341 (WSSV…YWWL), 350–370 (VGAI…LGIF), and 400–420 (LISA…LFWI).

It belongs to the ammonia transporter channel (TC 1.A.11.2) family. As to quaternary structure, homotrimer.

It is found in the cell membrane. Functionally, involved in the uptake of ammonium/ammonia (NH(4)(+)/NH(3)). Transport is electrogenic. In Archaeoglobus fulgidus (strain ATCC 49558 / DSM 4304 / JCM 9628 / NBRC 100126 / VC-16), this protein is Ammonium transporter Amt2.